Consider the following 141-residue polypeptide: Large ribosomal subunit protein uL11 (141 aa).

The protein belongs to the universal ribosomal protein uL11 family. As to quaternary structure, part of the ribosomal stalk of the 50S ribosomal subunit. Interacts with L10 and the large rRNA to form the base of the stalk. L10 forms an elongated spine to which L12 dimers bind in a sequential fashion forming a multimeric L10(L12)X complex. In terms of processing, one or more lysine residues are methylated.

Functionally, forms part of the ribosomal stalk which helps the ribosome interact with GTP-bound translation factors. This is Large ribosomal subunit protein uL11 from Nautilia profundicola (strain ATCC BAA-1463 / DSM 18972 / AmH).